A 634-amino-acid polypeptide reads, in one-letter code: GTP-binding protein 4 (634 aa).

Position 2 is an N-acetylalanine (A2). K103 is modified (N6-acetyllysine; alternate). A Glycyl lysine isopeptide (Lys-Gly) (interchain with G-Cter in SUMO2); alternate cross-link involves residue K103. S122 is subject to Phosphoserine. An OBG-type G domain is found at 169-340 (RTLLLCGYPN…VKTEACDRLL (172 aa)). GTP-binding positions include 175–182 (GYPNVGKS), 221–225 (DTPGI), and 289–292 (NKCD). K332 participates in a covalent cross-link: Glycyl lysine isopeptide (Lys-Gly) (interchain with G-Cter in SUMO2). S468, S470, and S472 each carry phosphoserine. The interval 495–517 (ILESKEKNTQGPRMPRTAKKVQR) is disordered. K522 bears the N6-acetyllysine mark. A disordered region spans residues 529-634 (VDMDDKDDAH…KRKAGKKDRR (106 aa)). A Glycyl lysine isopeptide (Lys-Gly) (interchain with G-Cter in SUMO2) cross-link involves residue K534. Positions 544–554 (RRSRSITRKRK) are enriched in basic residues. Residue S558 is modified to Phosphoserine. Positions 560 to 572 (PPSSVARSGSCSR) are enriched in polar residues. Basic and acidic residues predominate over residues 573–585 (TPRDVSGLRDVKM). Positions 586–604 (VKKAKTMMKNAQKKMNRLG) are enriched in basic residues. Over residues 605-618 (KKGEADRHVFDMKP) the composition is skewed to basic and acidic residues. Basic residues predominate over residues 619-634 (KHLLSGKRKAGKKDRR).

Belongs to the TRAFAC class OBG-HflX-like GTPase superfamily. OBG GTPase family. NOG subfamily. As to quaternary structure, associates with pre-60S ribosomal particles. Interacts with MINAS-60 (product of an alternative open reading frame of RBM10).

It is found in the nucleus. The protein localises to the nucleolus. In terms of biological role, involved in the biogenesis of the 60S ribosomal subunit. Acts as a TP53 repressor, preventing TP53 stabilization and cell cycle arrest. This Homo sapiens (Human) protein is GTP-binding protein 4.